We begin with the raw amino-acid sequence, 358 residues long: Histidinol-phosphate aminotransferase (358 aa).

At lysine 210 the chain carries N6-(pyridoxal phosphate)lysine.

The protein belongs to the class-II pyridoxal-phosphate-dependent aminotransferase family. Histidinol-phosphate aminotransferase subfamily. As to quaternary structure, homodimer. Requires pyridoxal 5'-phosphate as cofactor.

It catalyses the reaction L-histidinol phosphate + 2-oxoglutarate = 3-(imidazol-4-yl)-2-oxopropyl phosphate + L-glutamate. It participates in amino-acid biosynthesis; L-histidine biosynthesis; L-histidine from 5-phospho-alpha-D-ribose 1-diphosphate: step 7/9. This is Histidinol-phosphate aminotransferase from Clostridium beijerinckii (strain ATCC 51743 / NCIMB 8052) (Clostridium acetobutylicum).